Consider the following 556-residue polypeptide: MSVSAFNRRWAAVILEALTRQGVRHICIAPGSRSTPLTLAAAENSAFIHHTHFDERGLGHLALGLAKVSKQPVAVIVTSGTAVANLYPALIEAGLTGEKLILLTADRPPELIDCGANQAIRQPGMFASHPTHSISLPRPTQDIPARWLVSTIDHALGTLHAGGVHINCPFAEPLYGEMDDTGLSWQQRLGDWWQDDKPWLREAPRLESEKQRDWFFWRQKRGVVVAGRMSAEEGKKVALWAQTLGWPLIGDVLSQTGQPLPCADLWLGNAKATSELQQAQIVVQLGSSLTGKRLLQWQASCEPEEYWIVDDIEGRLDPAHHRGRRLIANIADWLEQHPAEKRQPWCVEIPRLAEQAMQAVIARRDAFGEAQLAHRISDYLPEQGQLFVGNSLVVRLIDALSQLPAGYPVYSNRGASGIDGLLSTAAGVQRASGKPTLAIVGDLSALYDLNALALLRQVSAPLVLIVVNNNGGQIFSLLPTPKNERERFYLMPQNVHFEHAAAMFELKYHRPQNWQELETALVDAWRTPTTTVIEMVVNDTDGAQTLQQLLAQVSHL.

This sequence belongs to the TPP enzyme family. MenD subfamily. As to quaternary structure, homodimer. It depends on Mg(2+) as a cofactor. Requires Mn(2+) as cofactor. The cofactor is thiamine diphosphate.

The enzyme catalyses isochorismate + 2-oxoglutarate + H(+) = 5-enolpyruvoyl-6-hydroxy-2-succinyl-cyclohex-3-ene-1-carboxylate + CO2. It functions in the pathway quinol/quinone metabolism; 1,4-dihydroxy-2-naphthoate biosynthesis; 1,4-dihydroxy-2-naphthoate from chorismate: step 2/7. Its pathway is quinol/quinone metabolism; menaquinone biosynthesis. Functionally, catalyzes the thiamine diphosphate-dependent decarboxylation of 2-oxoglutarate and the subsequent addition of the resulting succinic semialdehyde-thiamine pyrophosphate anion to isochorismate to yield 2-succinyl-5-enolpyruvyl-6-hydroxy-3-cyclohexene-1-carboxylate (SEPHCHC). The polypeptide is 2-succinyl-5-enolpyruvyl-6-hydroxy-3-cyclohexene-1-carboxylate synthase (Escherichia coli (strain SMS-3-5 / SECEC)).